A 675-amino-acid polypeptide reads, in one-letter code: MTAPGFVDFPDSPFHLYQPYPPAGDQPAAIEGLAQGMRDGLMYQTLLGVTGSGKTYTMANIIARLGRPALVLAPNKTLAAQLYAEMREFFPKNAVEYFVSYYDYYQPEAYVPTRDLFIEKDSSINEHIEQMRLSATKSLLERRDTVIVGTVSCIYGIGNPGDYHAMVLILRAGDRISRREVLARLVAMQYTRNDADFARGTFRVRGETLDIFPAESPELALRLTLFDDEIESLELFDPLTGRVRQKVPRFTVYPGSHYVTPRDTVLRAIETIKEELRDRLKLLTAEGKLVEAQRLEQRTRFDLEMLQELGFCKGIENYSRHLSGAAPGEPPPTLIDYLPADALMFIDESHVTMGQLGGMYRGDRARKETLVQYGFRLPSALDNRPLRLEEFEARMRQCVFVSATPAAYEQEHSDNVVEQVVRPTGLVDPQVEVRPARTQVDDLLGEIKLRVAAQERVLVTTLTKRMAEDLTDFLAEHGVRVRYLHSDIDTVERVEIIRDLRLGTFDVLVGINLLREGLDIPEVSLVAILDADKEGFLRSERSLIQTIGRAARNLNGHAILYADAITASMRRAMDETERRRTKQLAFNAEHGITARGVNKAVRELIDGIVAPARHDTLESAIAPEVLADEKSVAREIRRLEKLMTDHARNLEFEQAAAARDALNALKQRVLLDGAA.

The Helicase ATP-binding domain occupies 35–192 (QGMRDGLMYQ…ARLVAMQYTR (158 aa)). ATP is bound at residue 48-55 (GVTGSGKT). The short motif at 101-124 (YYDYYQPEAYVPTRDLFIEKDSSI) is the Beta-hairpin element. Positions 439 to 605 (QVDDLLGEIK…GVNKAVRELI (167 aa)) constitute a Helicase C-terminal domain. A UVR domain is found at 633-668 (AREIRRLEKLMTDHARNLEFEQAAAARDALNALKQR).

The protein belongs to the UvrB family. As to quaternary structure, forms a heterotetramer with UvrA during the search for lesions. Interacts with UvrC in an incision complex.

The protein resides in the cytoplasm. The UvrABC repair system catalyzes the recognition and processing of DNA lesions. A damage recognition complex composed of 2 UvrA and 2 UvrB subunits scans DNA for abnormalities. Upon binding of the UvrA(2)B(2) complex to a putative damaged site, the DNA wraps around one UvrB monomer. DNA wrap is dependent on ATP binding by UvrB and probably causes local melting of the DNA helix, facilitating insertion of UvrB beta-hairpin between the DNA strands. Then UvrB probes one DNA strand for the presence of a lesion. If a lesion is found the UvrA subunits dissociate and the UvrB-DNA preincision complex is formed. This complex is subsequently bound by UvrC and the second UvrB is released. If no lesion is found, the DNA wraps around the other UvrB subunit that will check the other stand for damage. This is UvrABC system protein B from Bordetella petrii (strain ATCC BAA-461 / DSM 12804 / CCUG 43448).